Here is a 429-residue protein sequence, read N- to C-terminus: Serine--tRNA ligase (429 aa).

Residue T234–E236 participates in L-serine binding. Residues R265–E267 and V281 contribute to the ATP site. L-serine is bound at residue E288. E352–S355 lines the ATP pocket. T389 serves as a coordination point for L-serine.

The protein belongs to the class-II aminoacyl-tRNA synthetase family. Type-1 seryl-tRNA synthetase subfamily. In terms of assembly, homodimer. The tRNA molecule probably binds across the dimer.

The enzyme catalyses tRNA(Ser) + L-serine + ATP = L-seryl-tRNA(Ser) + AMP + diphosphate + H(+). The catalysed reaction is tRNA(Sec) + L-serine + ATP = L-seryl-tRNA(Sec) + AMP + diphosphate + H(+). It functions in the pathway aminoacyl-tRNA biosynthesis; selenocysteinyl-tRNA(Sec) biosynthesis; L-seryl-tRNA(Sec) from L-serine and tRNA(Sec): step 1/1. Catalyzes the attachment of serine to tRNA(Ser). Is also probably able to aminoacylate tRNA(Sec) with serine, to form the misacylated tRNA L-seryl-tRNA(Sec), which will be further converted into selenocysteinyl-tRNA(Sec). In Encephalitozoon cuniculi (strain GB-M1) (Microsporidian parasite), this protein is Serine--tRNA ligase.